The sequence spans 704 residues: Phosphate acetyltransferase (704 aa).

The segment at 380–704 (FNLIEKAKRN…IQAQAEKGLI (325 aa)) is phosphate acetyltransferase.

This sequence in the N-terminal section; belongs to the CobB/CobQ family. It in the C-terminal section; belongs to the phosphate acetyltransferase and butyryltransferase family. In terms of assembly, homohexamer.

Its subcellular location is the cytoplasm. The catalysed reaction is acetyl-CoA + phosphate = acetyl phosphate + CoA. It functions in the pathway metabolic intermediate biosynthesis; acetyl-CoA biosynthesis; acetyl-CoA from acetate: step 2/2. In terms of biological role, involved in acetate metabolism. The protein is Phosphate acetyltransferase (pta) of Nitratidesulfovibrio vulgaris (strain ATCC 29579 / DSM 644 / CCUG 34227 / NCIMB 8303 / VKM B-1760 / Hildenborough) (Desulfovibrio vulgaris).